Reading from the N-terminus, the 309-residue chain is Ribonuclease Z (309 aa).

7 residues coordinate Zn(2+): His-63, His-65, Asp-67, His-68, His-145, Asp-216, and His-274. Asp-67 acts as the Proton acceptor in catalysis.

Belongs to the RNase Z family. As to quaternary structure, homodimer. It depends on Zn(2+) as a cofactor.

It carries out the reaction Endonucleolytic cleavage of RNA, removing extra 3' nucleotides from tRNA precursor, generating 3' termini of tRNAs. A 3'-hydroxy group is left at the tRNA terminus and a 5'-phosphoryl group is left at the trailer molecule.. In terms of biological role, zinc phosphodiesterase, which displays some tRNA 3'-processing endonuclease activity. Probably involved in tRNA maturation, by removing a 3'-trailer from precursor tRNA. The sequence is that of Ribonuclease Z from Streptococcus pneumoniae serotype 2 (strain D39 / NCTC 7466).